We begin with the raw amino-acid sequence, 258 residues long: Myogenic factor 5 (258 aa).

The segment at 21–50 (LSSPEGEFPEDFEPRELPPFGAPAPTEPAC) is disordered. The bHLH domain occupies 85–136 (DRRKAATMRERRRLKKVNQAFETLKRCTTANPNQRLPKVEILRNAIRYIESL). A disordered region spans residues 220–258 (AEEPGLPLRHAGSLSPGASIDSGPGTPGSPPPRRTYQAL).

In terms of assembly, efficient DNA binding requires dimerization with another bHLH protein.

It is found in the nucleus. Its function is as follows. Acts as a transcriptional activator that promotes transcription of muscle-specific target genes and plays a role in muscle differentiation. Induces fibroblasts to differentiate into myoblasts. Probable sequence specific DNA-binding protein. The polypeptide is Myogenic factor 5 (MYF5) (Gallus gallus (Chicken)).